Consider the following 553-residue polypeptide: Dihydroxy-acid dehydratase (553 aa).

Aspartate 78 is a binding site for Mg(2+). A [2Fe-2S] cluster-binding site is contributed by cysteine 119. 2 residues coordinate Mg(2+): aspartate 120 and lysine 121. Lysine 121 carries the post-translational modification N6-carboxylysine. Residue cysteine 193 participates in [2Fe-2S] cluster binding. Glutamate 441 is a binding site for Mg(2+). Serine 467 (proton acceptor) is an active-site residue.

The protein belongs to the IlvD/Edd family. Homodimer. [2Fe-2S] cluster is required as a cofactor. Requires Mg(2+) as cofactor.

It carries out the reaction (2R)-2,3-dihydroxy-3-methylbutanoate = 3-methyl-2-oxobutanoate + H2O. It catalyses the reaction (2R,3R)-2,3-dihydroxy-3-methylpentanoate = (S)-3-methyl-2-oxopentanoate + H2O. The protein operates within amino-acid biosynthesis; L-isoleucine biosynthesis; L-isoleucine from 2-oxobutanoate: step 3/4. Its pathway is amino-acid biosynthesis; L-valine biosynthesis; L-valine from pyruvate: step 3/4. Its function is as follows. Functions in the biosynthesis of branched-chain amino acids. Catalyzes the dehydration of (2R,3R)-2,3-dihydroxy-3-methylpentanoate (2,3-dihydroxy-3-methylvalerate) into 2-oxo-3-methylpentanoate (2-oxo-3-methylvalerate) and of (2R)-2,3-dihydroxy-3-methylbutanoate (2,3-dihydroxyisovalerate) into 2-oxo-3-methylbutanoate (2-oxoisovalerate), the penultimate precursor to L-isoleucine and L-valine, respectively. The chain is Dihydroxy-acid dehydratase from Geobacter sp. (strain M21).